The primary structure comprises 244 residues: ATP-dependent Clp protease ATP-binding subunit CLPT4, chloroplastic (244 aa).

The transit peptide at 1 to 64 (MQALQASRLT…WRSSGRVITR (64 aa)) directs the protein to the chloroplast. Low complexity predominate over residues 30 to 48 (SRPISSGVSSSQELSSRSS). Disordered stretches follow at residues 30-55 (SRPI…TKSW) and 220-244 (GRRY…VSFL).

The protein belongs to the ClpA/ClpB family.

The protein resides in the plastid. The protein localises to the chloroplast. In terms of biological role, accessory protein regulating the assembly of the plastid Clp protease system. This chain is ATP-dependent Clp protease ATP-binding subunit CLPT4, chloroplastic, found in Chlamydomonas reinhardtii (Chlamydomonas smithii).